We begin with the raw amino-acid sequence, 326 residues long: Transcription factor MYB16 (326 aa).

HTH myb-type domains are found at residues Lys9–Leu61 and Arg62–Leu116. 2 consecutive DNA-binding regions (H-T-H motif) follow at residues Trp37–Leu61 and Trp89–Leu112. 2 disordered regions span residues Asn197–Ser217 and Asp280–Cys299. Polar residues predominate over residues Gln208–Ser217. Residues Asp280 to Thr290 show a composition bias toward basic and acidic residues.

As to expression, expressed in trichomes, epidermis and mesophyll cells of young leaves, stems, petals, sepals, carpels and stamens.

It is found in the nucleus. Its function is as follows. Involved in the control of epidermal cell morphogenesis in petals. Promotes unidirectional cell expansion once outgrowth has been initiated. Coordinately with WIN1/SHN1, participates in the regulation of cuticle biosynthesis and wax accumulation in reproductive organs and trichomes. Functions in cuticle nanoridge formation in petals and stamens, and in morphogenesis of petal conical cells and trichomes. Functions as a major regulator of cuticle formation in vegetative organs by regulating the cuticle biosynthesis genes CYP86A8/LCR and CER1. This chain is Transcription factor MYB16, found in Arabidopsis thaliana (Mouse-ear cress).